The chain runs to 342 residues: Phenylalanine--tRNA ligase alpha subunit (342 aa).

E260 is a Mg(2+) binding site.

It belongs to the class-II aminoacyl-tRNA synthetase family. Phe-tRNA synthetase alpha subunit type 1 subfamily. In terms of assembly, tetramer of two alpha and two beta subunits. Mg(2+) serves as cofactor.

It localises to the cytoplasm. It catalyses the reaction tRNA(Phe) + L-phenylalanine + ATP = L-phenylalanyl-tRNA(Phe) + AMP + diphosphate + H(+). The sequence is that of Phenylalanine--tRNA ligase alpha subunit from Mycobacterium avium (strain 104).